A 24-amino-acid polypeptide reads, in one-letter code: Retinol-binding protein 3 (24 aa).

It is found in the secreted. The protein resides in the extracellular space. The protein localises to the extracellular matrix. It localises to the interphotoreceptor matrix. Functionally, IRBP shuttles 11-cis and all trans retinoids between the retinol isomerase in the pigment epithelium and the visual pigments in the photoreceptor cells of the retina. The chain is Retinol-binding protein 3 (RBP3) from Ovis aries (Sheep).